Reading from the N-terminus, the 547-residue chain is Probable terpene synthase 3 (547 aa).

Mg(2+) is bound by residues Asp-298, Asp-302, and Glu-451. A DDXXD motif motif is present at residues Asp-298–Asp-302.

This sequence belongs to the terpene synthase family. It depends on Mg(2+) as a cofactor.

In terms of biological role, probable sesquiterpene synthase. The polypeptide is Probable terpene synthase 3 (TPS3) (Ricinus communis (Castor bean)).